The sequence spans 445 residues: UPF0210 protein SZO_15840 (445 aa).

The protein belongs to the UPF0210 family. As to quaternary structure, homodimer.

This is UPF0210 protein SZO_15840 from Streptococcus equi subsp. zooepidemicus (strain H70).